We begin with the raw amino-acid sequence, 65 residues long: Muscarinic m1-toxin2 (65 aa).

Cystine bridges form between C3–C24, C17–C42, C46–C57, and C58–C63.

The protein belongs to the three-finger toxin family. Short-chain subfamily. Aminergic toxin sub-subfamily. As to quaternary structure, monomer. In terms of tissue distribution, expressed by the venom gland.

Its subcellular location is the secreted. Binds irreversibly and specifically to M1 (CHRM1) muscarinic acetylcholine receptors, blocking further binding of antagonists and preventing the action of agonists. This chain is Muscarinic m1-toxin2, found in Dendroaspis angusticeps (Eastern green mamba).